Consider the following 160-residue polypeptide: 6,7-dimethyl-8-ribityllumazine synthase (160 aa).

5-amino-6-(D-ribitylamino)uracil contacts are provided by residues tryptophan 28, 59–61, and 82–84; these read SFE and VII. (2S)-2-hydroxy-3-oxobutyl phosphate is bound at residue 87 to 88; that stretch reads GT. Histidine 90 serves as the catalytic Proton donor. Residue phenylalanine 115 coordinates 5-amino-6-(D-ribitylamino)uracil. Arginine 129 is a binding site for (2S)-2-hydroxy-3-oxobutyl phosphate.

Belongs to the DMRL synthase family.

It catalyses the reaction (2S)-2-hydroxy-3-oxobutyl phosphate + 5-amino-6-(D-ribitylamino)uracil = 6,7-dimethyl-8-(1-D-ribityl)lumazine + phosphate + 2 H2O + H(+). Its pathway is cofactor biosynthesis; riboflavin biosynthesis; riboflavin from 2-hydroxy-3-oxobutyl phosphate and 5-amino-6-(D-ribitylamino)uracil: step 1/2. In terms of biological role, catalyzes the formation of 6,7-dimethyl-8-ribityllumazine by condensation of 5-amino-6-(D-ribitylamino)uracil with 3,4-dihydroxy-2-butanone 4-phosphate. This is the penultimate step in the biosynthesis of riboflavin. The polypeptide is 6,7-dimethyl-8-ribityllumazine synthase (Clavibacter sepedonicus (Clavibacter michiganensis subsp. sepedonicus)).